Reading from the N-terminus, the 258-residue chain is Type III pantothenate kinase (258 aa).

6–13 (DVGNTNIV) is a binding site for ATP. Residues tyrosine 100 and 107–110 (GADR) contribute to the substrate site. The active-site Proton acceptor is the aspartate 109. Residue aspartate 129 coordinates K(+). Threonine 132 serves as a coordination point for ATP. Threonine 184 is a binding site for substrate.

This sequence belongs to the type III pantothenate kinase family. As to quaternary structure, homodimer. NH4(+) serves as cofactor. It depends on K(+) as a cofactor.

Its subcellular location is the cytoplasm. It catalyses the reaction (R)-pantothenate + ATP = (R)-4'-phosphopantothenate + ADP + H(+). Its pathway is cofactor biosynthesis; coenzyme A biosynthesis; CoA from (R)-pantothenate: step 1/5. In terms of biological role, catalyzes the phosphorylation of pantothenate (Pan), the first step in CoA biosynthesis. The sequence is that of Type III pantothenate kinase from Clostridium botulinum (strain Loch Maree / Type A3).